The chain runs to 312 residues: Envelope glycoprotein K (312 aa).

Positions 1–20 are cleaved as a signal peptide; sequence MLLGGRPLHLLVLGVMGAYA. At 21–91 the chain is on the extracellular side; the sequence is GLGAYYATVA…VVYARRDCRA (71 aa). Residues N58 and N67 are each glycosylated (N-linked (GlcNAc...) asparagine; by host). Residues 92–112 traverse the membrane as a helical segment; sequence YLWDVHFRLAAVAWLLYAAFV. The Cytoplasmic portion of the chain corresponds to 113–187; sequence YARQERRMFG…DPITLAHRHP (75 aa). Residues 188–208 form a helical membrane-spanning segment; the sequence is TLIALILLELGLRLGARMALF. The Extracellular portion of the chain corresponds to 209–227; sequence TTLGVTRAPCALVFPLYAR. A helical membrane pass occupies residues 228–248; it reads ALVWIFVLAVGALELLAATLP. Topologically, residues 249–280 are cytoplasmic; sequence HIARVSGATATPARSDGGRAALGVCGACCSTV. A helical membrane pass occupies residues 281–301; the sequence is LAGIFAKALYLCLLVGGVLLF. Over 302 to 312 the chain is Extracellular; sequence LHYERHITIFG.

It belongs to the alphaherpesvirinae glycoprotein K family. In terms of assembly, interacts (via UL20 interaction region) with protein UL20 homolog (via N-terminus); this interaction probably plays a role in the coordinate transport of protein UL20 homolog and gK to the trans-Golgi network (TGN), and is required for the cell surface expression of gK. In terms of processing, N-glycosylated.

The protein resides in the host cell membrane. It is found in the host endosome membrane. It localises to the host Golgi apparatus membrane. Its function is as follows. Glycoprotein that probably modulates membrane fusion events during secondary envelopment of cytoplasmic capsids that bud into specific trans-Golgi network (TGN)-derived membranes. In Sus scrofa (Pig), this protein is Envelope glycoprotein K (gK).